The primary structure comprises 358 residues: Arginase (358 aa).

Residues His146, Asp174, His176, and Asp178 each contribute to the Mn(2+) site. Residues His176–Asn180, Ser187–Asn189, and Asp233 contribute to the substrate site. Mn(2+) is bound by residues Asp280 and Asp282. Residues Thr294 and Glu325 each contribute to the substrate site.

Belongs to the arginase family. Homohexamer. It depends on Mn(2+) as a cofactor.

The protein resides in the cytoplasm. The enzyme catalyses L-arginine + H2O = urea + L-ornithine. It participates in nitrogen metabolism; urea cycle; L-ornithine and urea from L-arginine: step 1/1. The chain is Arginase (aga-1) from Neurospora crassa (strain ATCC 24698 / 74-OR23-1A / CBS 708.71 / DSM 1257 / FGSC 987).